A 578-amino-acid chain; its full sequence is Vacuolar protein 8 (578 aa).

9 ARM repeats span residues 58–95 (NRAE…FAEI), 96–135 (TERD…NLAV), 137–176 (ADNK…NLAT), 178–217 (EDNK…NMTH), 219–258 (DDNR…NIAV), 262–301 (NRKR…NLAS), 303–342 (EKYQ…NISI), 344–384 (PLNE…NLAA), and 428–467 (DELK…NLSS).

Belongs to the beta-catenin family.

The protein localises to the vacuole membrane. In terms of biological role, functions in both vacuole inheritance and protein targeting from the cytoplasm to vacuole. The chain is Vacuolar protein 8 (vac8) from Aspergillus oryzae (strain ATCC 42149 / RIB 40) (Yellow koji mold).